The primary structure comprises 225 residues: Small ribosomal subunit protein eS1 (225 aa).

The protein belongs to the eukaryotic ribosomal protein eS1 family.

The sequence is that of Small ribosomal subunit protein eS1 from Methanococcus maripaludis (strain DSM 14266 / JCM 13030 / NBRC 101832 / S2 / LL).